The chain runs to 163 residues: Cyanate hydratase (163 aa).

Catalysis depends on residues R103, E106, and S129.

This sequence belongs to the cyanase family.

The catalysed reaction is cyanate + hydrogencarbonate + 3 H(+) = NH4(+) + 2 CO2. Its function is as follows. Catalyzes the reaction of cyanate with bicarbonate to produce ammonia and carbon dioxide. The chain is Cyanate hydratase from Talaromyces marneffei (strain ATCC 18224 / CBS 334.59 / QM 7333) (Penicillium marneffei).